Here is a 150-residue protein sequence, read N- to C-terminus: MNVILLDKIANLGNLGDQVVVKAGYARNYLLPQGKAVVANESNVKVFEARRAELEAKLAAELAAANQRAEKITALEAVVIASKAGDEGKLFGSVGNRDIADAVTAAGVELAKSEVRLPLGALRTTGDFEVEVQLHTEVKAVVKVSIVAEA.

The protein belongs to the bacterial ribosomal protein bL9 family.

Its function is as follows. Binds to the 23S rRNA. This chain is Large ribosomal subunit protein bL9, found in Shewanella putrefaciens (strain CN-32 / ATCC BAA-453).